Consider the following 338-residue polypeptide: Lipopolysaccharide 1,2-glucosyltransferase (338 aa).

UDP contacts are provided by residues 33–38 (GVDANY) and 130–131 (DA). Mg(2+) contacts are provided by aspartate 130 and aspartate 132. Short sequence motifs (DXD) lie at residues 130-132 (DAD) and 215-217 (DQD). Histidine 264 is a binding site for Mg(2+). 264 to 270 (HYTGATK) lines the UDP pocket.

Belongs to the glycosyltransferase 8 family. The cofactor is Mg(2+).

The protein localises to the cell inner membrane. The catalysed reaction is UDP-glucose + [lipopolysaccharide] = UDP + D-glucosyl-[lipopolysaccharide].. It catalyses the reaction alpha-D-Glc-(1-&gt;3)-[alpha-D-Gal-(1-&gt;6)]-alpha-D-Glc-(1-&gt;3)-[L-alpha-D-Hep-(1-&gt;7)]-4-O-PO3(2-)-L-alpha-D-Hep-(1-&gt;3)-4-O-PO3(2-)-L-alpha-D-Hep-(1-&gt;5)-[alpha-Kdo-(2-&gt;4)]-alpha-Kdo-(2-&gt;6)-lipid A + UDP-alpha-D-glucose = alpha-D-Glc-(1-&gt;2)-alpha-D-Glc-(1-&gt;3)-[alpha-D-Gal-(1-&gt;6)]-alpha-D-Glc-(1-&gt;3)-[L-alpha-D-Hep-(1-&gt;7)]-4-O-PO3(2-)-L-alpha-D-Hep-(1-&gt;3)-4-O-PO3(2-)-L-alpha-D-Hep-(1-&gt;5)-[alpha-Kdo-(2-&gt;4)]-alpha-Kdo-(2-&gt;6)-lipid A + UDP + H(+). The protein operates within bacterial outer membrane biogenesis; LPS core biosynthesis. Glucosyltransferase involved in the biosynthesis of the core oligosaccharide region of lipopolysaccharide (LPS). Catalyzes the addition of a glucose (glucose III) to the outer-core glucose II. The sequence is that of Lipopolysaccharide 1,2-glucosyltransferase from Escherichia coli (strain K12).